The primary structure comprises 431 residues: Chaperone SurA (431 aa).

The signal sequence occupies residues 1–22; sequence MNLKKLLTSAVLSISLCQSAFA. PpiC domains lie at 173–274 and 283–383; these read AEEY…KVQD and TTET…QLLD.

It is found in the periplasm. It carries out the reaction [protein]-peptidylproline (omega=180) = [protein]-peptidylproline (omega=0). Functionally, chaperone involved in the correct folding and assembly of outer membrane proteins. Recognizes specific patterns of aromatic residues and the orientation of their side chains, which are found more frequently in integral outer membrane proteins. May act in both early periplasmic and late outer membrane-associated steps of protein maturation. The sequence is that of Chaperone SurA from Pseudoalteromonas translucida (strain TAC 125).